The chain runs to 386 residues: Formate-dependent phosphoribosylglycinamide formyltransferase (386 aa).

Residues 15 to 16 and Glu75 each bind N(1)-(5-phospho-beta-D-ribosyl)glycinamide; that span reads EL. Residues Arg107, Lys148, 153–158, 188–191, and Glu196 each bind ATP; these read SSGKGQ and EQFI. An ATP-grasp domain is found at 112–301; the sequence is ALAAQQLNLQ…EFELHLRAIV (190 aa). Mg(2+) is bound by residues Glu260 and Glu272. N(1)-(5-phospho-beta-D-ribosyl)glycinamide contacts are provided by residues Asp279, Lys349, and 356-357; that span reads RR.

Belongs to the PurK/PurT family. Homodimer.

The catalysed reaction is N(1)-(5-phospho-beta-D-ribosyl)glycinamide + formate + ATP = N(2)-formyl-N(1)-(5-phospho-beta-D-ribosyl)glycinamide + ADP + phosphate + H(+). The protein operates within purine metabolism; IMP biosynthesis via de novo pathway; N(2)-formyl-N(1)-(5-phospho-D-ribosyl)glycinamide from N(1)-(5-phospho-D-ribosyl)glycinamide (formate route): step 1/1. Involved in the de novo purine biosynthesis. Catalyzes the transfer of formate to 5-phospho-ribosyl-glycinamide (GAR), producing 5-phospho-ribosyl-N-formylglycinamide (FGAR). Formate is provided by PurU via hydrolysis of 10-formyl-tetrahydrofolate. The sequence is that of Formate-dependent phosphoribosylglycinamide formyltransferase from Francisella tularensis subsp. tularensis (strain SCHU S4 / Schu 4).